A 106-amino-acid polypeptide reads, in one-letter code: Large ribosomal subunit protein uL24 (106 aa).

The protein belongs to the universal ribosomal protein uL24 family. Part of the 50S ribosomal subunit.

Its function is as follows. One of two assembly initiator proteins, it binds directly to the 5'-end of the 23S rRNA, where it nucleates assembly of the 50S subunit. In terms of biological role, one of the proteins that surrounds the polypeptide exit tunnel on the outside of the subunit. This chain is Large ribosomal subunit protein uL24, found in Blochmanniella pennsylvanica (strain BPEN).